The sequence spans 92 residues: Elongation factor 1-beta (92 aa).

The protein belongs to the EF-1-beta/EF-1-delta family.

Its function is as follows. Promotes the exchange of GDP for GTP in EF-1-alpha/GDP, thus allowing the regeneration of EF-1-alpha/GTP that could then be used to form the ternary complex EF-1-alpha/GTP/AAtRNA. This is Elongation factor 1-beta (ef1b) from Pyrobaculum aerophilum (strain ATCC 51768 / DSM 7523 / JCM 9630 / CIP 104966 / NBRC 100827 / IM2).